Here is a 65-residue protein sequence, read N- to C-terminus: Large ribosomal subunit protein bL35 (65 aa).

2 stretches are compositionally biased toward basic residues: residues 1–11 and 21–43; these read MPKIKTRRSAA and KFKRRRQNLRHILTKKAASRKMR. Residues 1–65 form a disordered region; sequence MPKIKTRRSA…KAVRRMLPNG (65 aa).

The protein belongs to the bacterial ribosomal protein bL35 family.

The sequence is that of Large ribosomal subunit protein bL35 from Desulfovibrio desulfuricans (strain ATCC 27774 / DSM 6949 / MB).